The chain runs to 155 residues: Endoribonuclease YbeY (155 aa).

3 residues coordinate Zn(2+): His-114, His-118, and His-124.

Belongs to the endoribonuclease YbeY family. Zn(2+) is required as a cofactor.

The protein resides in the cytoplasm. In terms of biological role, single strand-specific metallo-endoribonuclease involved in late-stage 70S ribosome quality control and in maturation of the 3' terminus of the 16S rRNA. The polypeptide is Endoribonuclease YbeY (Escherichia coli O157:H7).